The sequence spans 218 residues: Protein-L-isoaspartate O-methyltransferase (218 aa).

Residue S60 is part of the active site.

It belongs to the methyltransferase superfamily. L-isoaspartyl/D-aspartyl protein methyltransferase family.

It localises to the cytoplasm. It catalyses the reaction [protein]-L-isoaspartate + S-adenosyl-L-methionine = [protein]-L-isoaspartate alpha-methyl ester + S-adenosyl-L-homocysteine. In terms of biological role, catalyzes the methyl esterification of L-isoaspartyl residues in peptides and proteins that result from spontaneous decomposition of normal L-aspartyl and L-asparaginyl residues. It plays a role in the repair and/or degradation of damaged proteins. This is Protein-L-isoaspartate O-methyltransferase from Roseiflexus sp. (strain RS-1).